A 123-amino-acid chain; its full sequence is DNA-directed RNA polymerase subunit omega (123 aa).

A disordered region spans residues 67 to 123; the sequence is EESAADSLSLGGFSTADVEAEVGGGPVQPDPGASQERAFDEAADGTAQGSGDPDPTT.

This sequence belongs to the RNA polymerase subunit omega family. In terms of assembly, the RNAP catalytic core consists of 2 alpha, 1 beta, 1 beta' and 1 omega subunit. When a sigma factor is associated with the core the holoenzyme is formed, which can initiate transcription.

It catalyses the reaction RNA(n) + a ribonucleoside 5'-triphosphate = RNA(n+1) + diphosphate. Promotes RNA polymerase assembly. Latches the N- and C-terminal regions of the beta' subunit thereby facilitating its interaction with the beta and alpha subunits. The polypeptide is DNA-directed RNA polymerase subunit omega (Halorhodospira halophila (strain DSM 244 / SL1) (Ectothiorhodospira halophila (strain DSM 244 / SL1))).